Reading from the N-terminus, the 419-residue chain is L-rhamnose isomerase (419 aa).

The Mn(2+) site is built by His-262, Asp-294, and Asp-296.

Belongs to the rhamnose isomerase family. In terms of assembly, homotetramer. Requires Mn(2+) as cofactor.

The protein resides in the cytoplasm. The enzyme catalyses L-rhamnopyranose = L-rhamnulose. The protein operates within carbohydrate degradation; L-rhamnose degradation; glycerone phosphate from L-rhamnose: step 1/3. In terms of biological role, catalyzes the interconversion of L-rhamnose and L-rhamnulose. In Salmonella choleraesuis (strain SC-B67), this protein is L-rhamnose isomerase.